Consider the following 1115-residue polypeptide: Carbamoyl phosphate synthase large chain (1115 aa).

The segment at 1–407 (MPRRTDLHHV…ALGKVMRSLE (407 aa)) is carboxyphosphate synthetic domain. Arginine 134, arginine 174, glycine 180, glycine 181, glutamate 213, isoleucine 215, glutamate 220, glycine 246, valine 247, histidine 248, glutamine 290, and glutamate 304 together coordinate ATP. The 196-residue stretch at 138–333 (KDIVAKAGGE…IAKIAAKLAI (196 aa)) folds into the ATP-grasp 1 domain. Glutamine 290, glutamate 304, and asparagine 306 together coordinate Mg(2+). Mn(2+) is bound by residues glutamine 290, glutamate 304, and asparagine 306. Positions 408–559 (TTRAGFWTAP…ELDPAAETEV (152 aa)) are oligomerization domain. Residues 560–965 (APQTERPKVL…AFAKSQTAAY (406 aa)) are carbamoyl phosphate synthetic domain. The ATP-grasp 2 domain occupies 693-884 (GDLLSAAGLP…LAKACARIML (192 aa)). ATP contacts are provided by arginine 729, arginine 768, leucine 770, glutamate 775, glycine 800, isoleucine 801, histidine 802, serine 803, glutamine 843, and glutamate 855. Mg(2+) is bound by residues glutamine 843, glutamate 855, and asparagine 857. Mn(2+) is bound by residues glutamine 843, glutamate 855, and asparagine 857. The MGS-like domain maps to 966–1113 (GSLPAQGTVF…QELHRVIGGV (148 aa)). An allosteric domain region spans residues 966 to 1115 (GSLPAQGTVF…LHRVIGGVER (150 aa)).

The protein belongs to the CarB family. In terms of assembly, composed of two chains; the small (or glutamine) chain promotes the hydrolysis of glutamine to ammonia, which is used by the large (or ammonia) chain to synthesize carbamoyl phosphate. Tetramer of heterodimers (alpha,beta)4. It depends on Mg(2+) as a cofactor. Mn(2+) is required as a cofactor.

It carries out the reaction hydrogencarbonate + L-glutamine + 2 ATP + H2O = carbamoyl phosphate + L-glutamate + 2 ADP + phosphate + 2 H(+). The enzyme catalyses hydrogencarbonate + NH4(+) + 2 ATP = carbamoyl phosphate + 2 ADP + phosphate + 2 H(+). The protein operates within amino-acid biosynthesis; L-arginine biosynthesis; carbamoyl phosphate from bicarbonate: step 1/1. It participates in pyrimidine metabolism; UMP biosynthesis via de novo pathway; (S)-dihydroorotate from bicarbonate: step 1/3. In terms of biological role, large subunit of the glutamine-dependent carbamoyl phosphate synthetase (CPSase). CPSase catalyzes the formation of carbamoyl phosphate from the ammonia moiety of glutamine, carbonate, and phosphate donated by ATP, constituting the first step of 2 biosynthetic pathways, one leading to arginine and/or urea and the other to pyrimidine nucleotides. The large subunit (synthetase) binds the substrates ammonia (free or transferred from glutamine from the small subunit), hydrogencarbonate and ATP and carries out an ATP-coupled ligase reaction, activating hydrogencarbonate by forming carboxy phosphate which reacts with ammonia to form carbamoyl phosphate. In Mycobacterium tuberculosis (strain CDC 1551 / Oshkosh), this protein is Carbamoyl phosphate synthase large chain.